The chain runs to 213 residues: MSRVLVPCHVKSTVALQVGDMRTSQGRPGVLVVDVTFPNIAPFELQEIMFKNYYTAFLSIRVRQQSSMHTAAKWVTCLRDYCLMPDPHSEEGAQDYVSLFKHQMLCDMNRVLELRLILRQPSPLWLSFTVEELQIYQQGPKSPSLAFPKWLSHPVSNEQPAPRLEGLPDPSRVSSEVQQMWALTEMIRASHTSTRIGRFDVDGCYDLNLLSYT.

In terms of assembly, part of the neuronal tubulin polyglutamylase complex which contains TPGS1, TPGS2, TTLL1, LRRC49 and NICN1. In terms of tissue distribution, high expression level is found in brain, testis, liver and kidney. Weak expression in spleen, leukocytes, small intestin and colon.

The protein localises to the nucleus. This Mus musculus (Mouse) protein is Nicolin-1 (Nicn1).